A 317-amino-acid polypeptide reads, in one-letter code: Apolipoprotein E (317 aa).

A signal peptide spans 1–18 (MKVLWAALLVTFLAGCQA). Thr-26 and Thr-36 each carry an O-linked (GalNAc...) threonine glycan. Tandem repeats lie at residues 80 to 101 (ALMD…EQLT), 102 to 123 (PVAE…ARLG), 124 to 145 (ADME…AMLG), 146 to 167 (QSTE…KRLL), 168 to 189 (RDAD…EGAE), 190 to 211 (RGLS…VRAA), 212 to 233 (TVGS…ERLR), and 234 to 255 (ARME…EQVA). The tract at residues 80–255 (ALMDETMKEL…RLDEVKEQVA (176 aa)) is 8 X 22 AA approximate tandem repeats. A glycan (N-linked (Glc) (glycation) lysine) is linked at Lys-93. Met-143 carries the methionine sulfoxide modification. Phosphoserine; by FAM20C is present on Ser-147. Residues 158-168 (HLRKLRKRLLR) form an LDL and other lipoprotein receptors binding region. 162 to 165 (LRKR) contacts heparin. A lipid-binding and lipoprotein association region spans residues 210-290 (AATVGSLAGQ…SWFEPLVEDM (81 aa)). An O-linked (GalNAc...) threonine glycan is attached at Thr-212. 229 to 236 (GERLRARM) lines the heparin pocket. Residues 266-317 (QQIRLQAEAFQARLKSWFEPLVEDMQRQWAGLVEKVQAAVGTSAAPVPSDNH) form a homooligomerization region. The interval 278 to 290 (RLKSWFEPLVEDM) is specificity for association with VLDL. O-linked (GalNAc...) threonine glycosylation is present at Thr-307. O-linked (GalNAc...) serine glycans are attached at residues Ser-308 and Ser-314.

The protein belongs to the apolipoprotein A1/A4/E family. Homotetramer. May interact with ABCA1; functionally associated with ABCA1 in the biogenesis of HDLs. May interact with APP/A4 amyloid-beta peptide; the interaction is extremely stable in vitro but its physiological significance is unclear. May interact with MAPT. May interact with MAP2. In the cerebrospinal fluid, interacts with secreted SORL1. Interacts with PMEL; this allows the loading of PMEL luminal fragment on ILVs to induce fibril nucleation. As to quaternary structure, (Microbial infection) Interacts with hepatitis C virus (HCV) envelope glycoprotein E2; this interaction is required for HCV infectivity and production. APOE exists as multiple glycosylated and sialylated glycoforms within cells and in plasma. The extent of glycosylation and sialylation are tissue and context specific. Plasma APOE undergoes desialylation and is less glycosylated and sialylated than the cellular form. Glycosylation is not required for proper expression and secretion. O-glycosylated with core 1 or possibly core 8 glycans. Thr-307 and Ser-314 are minor glycosylation sites compared to Ser-308. In terms of processing, glycated in plasma VLDL of normal subjects, and of hyperglycemic diabetic patients at a higher level (2-3 fold). Post-translationally, phosphorylated by FAM20C in the extracellular medium. Undergoes C-terminal proteolytic processing in neurons. C-terminally truncated APOE has a tendency to form neurotoxic intracellular neurofibrillary tangle-like inclusions in neurons. Produced by several tissues and cell types and mainly found associated with lipid particles in the plasma, the interstitial fluid and lymph. Mainly synthesized by liver hepatocytes. Significant quantities are also produced in brain, mainly by astrocytes and glial cells in the cerebral cortex, but also by neurons in frontal cortex and hippocampus. It is also expressed by cells of the peripheral nervous system. Also expressed by adrenal gland, testis, ovary, skin, kidney, spleen and adipose tissue and macrophages in various tissues.

Its subcellular location is the secreted. It localises to the extracellular space. The protein resides in the extracellular matrix. The protein localises to the extracellular vesicle. It is found in the endosome. Its subcellular location is the multivesicular body. APOE is an apolipoprotein, a protein associating with lipid particles, that mainly functions in lipoprotein-mediated lipid transport between organs via the plasma and interstitial fluids. APOE is a core component of plasma lipoproteins and is involved in their production, conversion and clearance. Apolipoproteins are amphipathic molecules that interact both with lipids of the lipoprotein particle core and the aqueous environment of the plasma. As such, APOE associates with chylomicrons, chylomicron remnants, very low density lipoproteins (VLDL) and intermediate density lipoproteins (IDL) but shows a preferential binding to high-density lipoproteins (HDL). It also binds a wide range of cellular receptors including the LDL receptor/LDLR, the LDL receptor-related proteins LRP1, LRP2 and LRP8 and the very low-density lipoprotein receptor/VLDLR that mediate the cellular uptake of the APOE-containing lipoprotein particles. Finally, APOE also has a heparin-binding activity and binds heparan-sulfate proteoglycans on the surface of cells, a property that supports the capture and the receptor-mediated uptake of APOE-containing lipoproteins by cells. A main function of APOE is to mediate lipoprotein clearance through the uptake of chylomicrons, VLDLs, and HDLs by hepatocytes. APOE is also involved in the biosynthesis by the liver of VLDLs as well as their uptake by peripheral tissues ensuring the delivery of triglycerides and energy storage in muscle, heart and adipose tissues. By participating in the lipoprotein-mediated distribution of lipids among tissues, APOE plays a critical role in plasma and tissues lipid homeostasis. APOE is also involved in two steps of reverse cholesterol transport, the HDLs-mediated transport of cholesterol from peripheral tissues to the liver, and thereby plays an important role in cholesterol homeostasis. First, it is functionally associated with ABCA1 in the biogenesis of HDLs in tissues. Second, it is enriched in circulating HDLs and mediates their uptake by hepatocytes. APOE also plays an important role in lipid transport in the central nervous system, regulating neuron survival and sprouting. APOE is also involved in innate and adaptive immune responses, controlling for instance the survival of myeloid-derived suppressor cells. Binds to the immune cell receptor LILRB4. APOE may also play a role in transcription regulation through a receptor-dependent and cholesterol-independent mechanism, that activates MAP3K12 and a non-canonical MAPK signal transduction pathway that results in enhanced AP-1-mediated transcription of APP. Functionally, (Microbial infection) Through its interaction with HCV envelope glycoprotein E2, participates in the attachment of HCV to HSPGs and other receptors (LDLr, VLDLr, and SR-B1) on the cell surface and to the assembly, maturation and infectivity of HCV viral particles. This interaction is probably promoted via the up-regulation of cellular autophagy by the virus. The protein is Apolipoprotein E of Homo sapiens (Human).